A 340-amino-acid polypeptide reads, in one-letter code: Heat-inducible transcription repressor HrcA (340 aa).

It belongs to the HrcA family.

In terms of biological role, negative regulator of class I heat shock genes (grpE-dnaK-dnaJ and groELS operons). Prevents heat-shock induction of these operons. In Burkholderia cenocepacia (strain ATCC BAA-245 / DSM 16553 / LMG 16656 / NCTC 13227 / J2315 / CF5610) (Burkholderia cepacia (strain J2315)), this protein is Heat-inducible transcription repressor HrcA.